The chain runs to 149 residues: Large ribosomal subunit protein bL9 (149 aa).

Belongs to the bacterial ribosomal protein bL9 family.

In terms of biological role, binds to the 23S rRNA. The polypeptide is Large ribosomal subunit protein bL9 (Geobacillus sp. (strain WCH70)).